Consider the following 234-residue polypeptide: LexA repressor (234 aa).

The segment at residues 26 to 46 (FEEMKEALDLKSKSGVHRLIS) is a DNA-binding region (H-T-H motif). Positions 73–100 (AVGKAAPVSQREAANTNSALPPLRAAPK) are disordered. Positions 91 to 100 (ALPPLRAAPK) are enriched in low complexity. Active-site for autocatalytic cleavage activity residues include S154 and K192.

The protein belongs to the peptidase S24 family. Homodimer.

It carries out the reaction Hydrolysis of Ala-|-Gly bond in repressor LexA.. Functionally, represses a number of genes involved in the response to DNA damage (SOS response), including recA and lexA. In the presence of single-stranded DNA, RecA interacts with LexA causing an autocatalytic cleavage which disrupts the DNA-binding part of LexA, leading to derepression of the SOS regulon and eventually DNA repair. This is LexA repressor from Novosphingobium aromaticivorans (strain ATCC 700278 / DSM 12444 / CCUG 56034 / CIP 105152 / NBRC 16084 / F199).